The primary structure comprises 156 residues: Ribosomal RNA large subunit methyltransferase H (156 aa).

S-adenosyl-L-methionine is bound by residues leucine 73, glycine 104, and 123-128 (LSSLTL).

This sequence belongs to the RNA methyltransferase RlmH family. As to quaternary structure, homodimer.

The protein resides in the cytoplasm. It catalyses the reaction pseudouridine(1915) in 23S rRNA + S-adenosyl-L-methionine = N(3)-methylpseudouridine(1915) in 23S rRNA + S-adenosyl-L-homocysteine + H(+). Specifically methylates the pseudouridine at position 1915 (m3Psi1915) in 23S rRNA. This chain is Ribosomal RNA large subunit methyltransferase H, found in Bordetella petrii (strain ATCC BAA-461 / DSM 12804 / CCUG 43448).